A 424-amino-acid polypeptide reads, in one-letter code: Cyclin-dependent kinase D-1 (424 aa).

The 281-residue stretch at 19 to 299 (YLKREVLGEG…AQQALEHRYF (281 aa)) folds into the Protein kinase domain. ATP is bound by residues 25–33 (LGEGTYGVV) and Lys48. Position 29 is a phosphothreonine (Thr29). Tyr30 carries the phosphotyrosine modification. Asp141 (proton acceptor) is an active-site residue. Ser168 bears the Phosphoserine mark. Position 174 is a phosphothreonine (Thr174). 2 disordered regions span residues 303 to 337 (PAPT…PVVL) and 359 to 424 (ADRT…GYTE). Basic and acidic residues predominate over residues 359–374 (ADRTEEHPSGARHMDD).

The protein belongs to the protein kinase superfamily. CMGC Ser/Thr protein kinase family. CDC2/CDKX subfamily.

Its subcellular location is the nucleus. The catalysed reaction is L-seryl-[protein] + ATP = O-phospho-L-seryl-[protein] + ADP + H(+). It catalyses the reaction L-threonyl-[protein] + ATP = O-phospho-L-threonyl-[protein] + ADP + H(+). The enzyme catalyses [DNA-directed RNA polymerase] + ATP = phospho-[DNA-directed RNA polymerase] + ADP + H(+). This Oryza sativa subsp. indica (Rice) protein is Cyclin-dependent kinase D-1 (CDKD-1).